The primary structure comprises 528 residues: uncharacterized protein (528 aa).

The segment at 1 to 51 (MEHPKRPTPKNEALHIDASGRGESSFSVHRSHSGGHEPFAPSPGSSIGASV) is disordered. Tandem repeats lie at residues 185–213 (EQEEEYISNSLLKKIQQLNQDKDYLVKKY) and 285–313 (EQEQELLINTLGKRMSQMNEEKRKLQQAL). The 2 X 29 AA repeats stretch occupies residues 185-313 (EQEEEYISNS…EEKRKLQQAL (129 aa)). Disordered regions lie at residues 467–497 (RAHGSSPPTVVVQPSTSRAGSNSTANINNDT) and 509–528 (TVHPTQRATPARNERPDSHY). A compositionally biased stretch (polar residues) spans 472-496 (SPPTVVVQPSTSRAGSNSTANINND).

This is an uncharacterized protein from Caenorhabditis elegans.